A 999-amino-acid polypeptide reads, in one-letter code: MDKKWSLEQRWLHLLNQQFLDCLNHLFNHYRRLSTFQKPPSIIRHMFSVLALAIQILANVNVVAQTTEAVDLAPPPKVRQIRIPGDILIGGVFPVHSKSLNGDEPCGEIAETRGVHRVEAMLYALDQINSQNDFLRGYKLGALILDSCSNPAYALNQSLDFVRDMIGSSEASDYVCLDGSDPNLKKQSQKKNVAAVVGGSYSSVSVQLANLLRLFRIAQVSPASTNADLSDKNRFEYFARTVPSDDYQAMAMVEIAVKFKWSYVSLVYSADEYGELGADAFKKEARKKGICIALEERIQNKKESFTESINNLVQKLQPEKNVGATVVVLFVGTEYIPDILRYTAERMKLTSGAKKRIIWLASESWDRNNDKYTAGDNRLAAQGAIVLMLASQKVPSFEEYFMSLHPGTEAFERNKWLRELWQVKYKCEFDTPPGSTASRCEDIKQSTEGFNADDKVQFVIDAVYAIAHGLQSMKQAICPDDAIENHWISRYSKQPEICHAMQNIDGSDFYQNYLLKVNFTGKTISIFSSFRLSPFSDIVGKRFRFSPQGDGPASYTILTYKPKSMDKKRRMTDDESSPSDYVEIGHWSENNLTIYEKNLWWDPDHTPVSVCSLPCKIGFRKQLIKDEQCCWACSKCEDYEYLINETHCVGCEQGWWPTKDRKGCFDLSLSQLKYMRWRSMYSLVPTILAVFGIIATLFVIVVYVIYNETPVVKASGRELSYILLISMIMCYCMTFVLLSKPSAIVCAIKRTGIGFAFSCLYSAMFVKTNRIFRIFSTRSAQRPRFISPISQVVMTAMLAGVQLIGSLIWLSVVPPGWRHHYPTRDQVVLTCNVPDHHFLYSLAYDGFLIVLCTTYAVKTRKVPENFNETKFIGFSMYTTCVVWLSWIFFFFGTGSDFQIQTSSLCISISMSANVALACIFSPKLWIILFEKHKNVRKQEGESMLNKSSRSLGNCSSRLCANSIDEPNQYTALLTDSTRRRSSRKTSQPTSTSSAHDTFL.

L-glutamate is bound by residues Ser202, 223–225, Tyr273, Glu363, and Lys455; that span reads AST. Asn518 carries an N-linked (GlcNAc...) asparagine glycan. The next 7 helical transmembrane spans lie at 682-704, 719-739, 751-769, 792-812, 836-857, 871-893, and 904-929; these read SLVP…VVYV, LSYI…VLLS, TGIG…VKTN, VVMT…WLSV, HHFL…TYAV, FIGF…FFGT, and LCIS…IILF. Positions 975-999 are disordered; sequence DSTRRRSSRKTSQPTSTSSAHDTFL. The span at 984 to 993 shows a compositional bias: low complexity; that stretch reads KTSQPTSTSS.

Belongs to the G-protein coupled receptor 3 family.

Its subcellular location is the cell membrane. Its function is as follows. G-protein coupled receptor for glutamate. Ligand binding causes a conformation change that triggers signaling via guanine nucleotide-binding proteins (G proteins) and modulates the activity of down-stream effectors. This Caenorhabditis elegans protein is Probable metabotropic glutamate receptor mgl-1 (mgl-1).